Consider the following 398-residue polypeptide: Ornithine aminotransferase (398 aa).

Lys-256 bears the N6-(pyridoxal phosphate)lysine mark.

It belongs to the class-III pyridoxal-phosphate-dependent aminotransferase family. OAT subfamily. Pyridoxal 5'-phosphate serves as cofactor.

Its subcellular location is the cytoplasm. It carries out the reaction a 2-oxocarboxylate + L-ornithine = L-glutamate 5-semialdehyde + an L-alpha-amino acid. It functions in the pathway amino-acid biosynthesis; L-proline biosynthesis; L-glutamate 5-semialdehyde from L-ornithine: step 1/1. Catalyzes the interconversion of ornithine to glutamate semialdehyde. The sequence is that of Ornithine aminotransferase from Halalkalibacterium halodurans (strain ATCC BAA-125 / DSM 18197 / FERM 7344 / JCM 9153 / C-125) (Bacillus halodurans).